Reading from the N-terminus, the 98-residue chain is Citrate lyase acyl carrier protein (98 aa).

At S14 the chain carries O-(phosphoribosyl dephospho-coenzyme A)serine.

The protein belongs to the CitD family. As to quaternary structure, oligomer with a subunit composition of (alpha,beta,gamma)6.

The protein localises to the cytoplasm. Functionally, covalent carrier of the coenzyme of citrate lyase. The chain is Citrate lyase acyl carrier protein from Escherichia coli O81 (strain ED1a).